We begin with the raw amino-acid sequence, 250 residues long: MRIPLIAGNWKMYKTVGEATTLVRDLLAGLGELSDREAIVCPPFTALAAVAALVADSPLGLGAQNLYPEAQGAFTGEVSPPMLVDIGCRYVIIGHSERRQYFGESDAFVNRKLRAALAHGLRPIVCVGESKPQRDAGQAEPIVTAQVRAALLEVPPDQMANVVIAYEPIWAIGTGDTATPADAQAMHAAIRATLAELYGSEIAATVRIQYGGSVKPDNIDELMAQPDIDGALVGGASLQAASFLRIIHYQ.

Position 9–11 (9–11 (NWK)) interacts with substrate. Catalysis depends on H95, which acts as the Electrophile. The active-site Proton acceptor is the E167. Substrate-binding positions include G173, S213, and 234–235 (GG).

It belongs to the triosephosphate isomerase family. Homodimer.

Its subcellular location is the cytoplasm. The enzyme catalyses D-glyceraldehyde 3-phosphate = dihydroxyacetone phosphate. It participates in carbohydrate biosynthesis; gluconeogenesis. It functions in the pathway carbohydrate degradation; glycolysis; D-glyceraldehyde 3-phosphate from glycerone phosphate: step 1/1. In terms of biological role, involved in the gluconeogenesis. Catalyzes stereospecifically the conversion of dihydroxyacetone phosphate (DHAP) to D-glyceraldehyde-3-phosphate (G3P). The sequence is that of Triosephosphate isomerase from Chloroflexus aurantiacus (strain ATCC 29366 / DSM 635 / J-10-fl).